A 416-amino-acid polypeptide reads, in one-letter code: Adenylosuccinate synthetase (416 aa).

GTP contacts are provided by residues G13–K19 and G41–T43. Residue D14 is the Proton acceptor of the active site. Mg(2+) is bound by residues D14 and G41. IMP-binding positions include D14–K17, N39–H42, T126, R140, Q220, T235, and R299. H42 serves as the catalytic Proton donor. A substrate-binding site is contributed by T295–R301. Residues R301, K327 to D329, and S405 to S407 each bind GTP.

It belongs to the adenylosuccinate synthetase family. In terms of assembly, homodimer. It depends on Mg(2+) as a cofactor.

It is found in the cytoplasm. It catalyses the reaction IMP + L-aspartate + GTP = N(6)-(1,2-dicarboxyethyl)-AMP + GDP + phosphate + 2 H(+). Its pathway is purine metabolism; AMP biosynthesis via de novo pathway; AMP from IMP: step 1/2. Its function is as follows. Plays an important role in the de novo pathway of purine nucleotide biosynthesis. Catalyzes the first committed step in the biosynthesis of AMP from IMP. The sequence is that of Adenylosuccinate synthetase from Campylobacter hominis (strain ATCC BAA-381 / DSM 21671 / CCUG 45161 / LMG 19568 / NCTC 13146 / CH001A).